A 246-amino-acid chain; its full sequence is Small ribosomal subunit protein uS2 (246 aa).

This sequence belongs to the universal ribosomal protein uS2 family.

This is Small ribosomal subunit protein uS2 from Lachnoclostridium phytofermentans (strain ATCC 700394 / DSM 18823 / ISDg) (Clostridium phytofermentans).